Here is a 277-residue protein sequence, read N- to C-terminus: Caspase-3 (277 aa).

Position 1 is an N-acetylmethionine (methionine 1). 2 consecutive propeptides follow at residues 1 to 9 and 10 to 28; these read MENTENSVD and SKSI…KSVD. Residues 1–10 are compositionally biased toward polar residues; that stretch reads MENTENSVDS. A disordered region spans residues 1-25; it reads MENTENSVDSKSIKNSEPKIIHGSK. Lysine 11 is subject to N6-acetyllysine. Over residues 11-20 the composition is skewed to basic and acidic residues; that stretch reads KSIKNSEPKI. A Phosphoserine modification is found at serine 26. Catalysis depends on residues histidine 121 and cysteine 163. At cysteine 163 the chain carries S-nitrosocysteine; in inhibited form.

This sequence belongs to the peptidase C14A family. Heterotetramer that consists of two anti-parallel arranged heterodimers, each one formed by a 17 kDa (p17) and a 12 kDa (p12) subunit. Interacts with BIRC6/bruce. Post-translationally, cleavage by granzyme B, caspase-6, caspase-8 and caspase-10 generates the two active subunits. Additional processing of the propeptides is likely due to the autocatalytic activity of the activated protease. Active heterodimers between the small subunit of caspase-7 protease and the large subunit of caspase-3 also occur and vice versa. In terms of processing, S-nitrosylated on its catalytic site cysteine in unstimulated cell lines and denitrosylated upon activation of the Fas apoptotic pathway, associated with an increase in intracellular caspase activity. Fas therefore activates caspase-3 not only by inducing the cleavage of the caspase zymogen to its active subunits, but also by stimulating the denitrosylation of its active site thiol. Ubiquitinated by BIRC6; this activity is inhibited by DIABLO/SMAC.

It localises to the cytoplasm. The catalysed reaction is Strict requirement for an Asp residue at positions P1 and P4. It has a preferred cleavage sequence of Asp-Xaa-Xaa-Asp-|- with a hydrophobic amino-acid residue at P2 and a hydrophilic amino-acid residue at P3, although Val or Ala are also accepted at this position.. With respect to regulation, inhibited by BIRC6; following inhibition of BIRC6-caspase binding by DIABLO/SMAC, BIRC6 is subjected to caspase cleavage, leading to an increase in active caspases. Its function is as follows. Involved in the activation cascade of caspases responsible for apoptosis execution. At the onset of apoptosis, it proteolytically cleaves poly(ADP-ribose) polymerase PARP1 at a '216-Asp-|-Gly-217' bond. Cleaves and activates sterol regulatory element binding proteins (SREBPs) between the basic helix-loop-helix leucine zipper domain and the membrane attachment domain. Cleaves and activates caspase-6, -7 and -9 (CASP6, CASP7 and CASP9, respectively). Cleaves and inactivates interleukin-18 (IL18). Triggers cell adhesion in sympathetic neurons through RET cleavage. Cleaves IL-1 beta between an Asp and an Ala, releasing the mature cytokine which is involved in a variety of inflammatory processes. Cleaves and inhibits serine/threonine-protein kinase AKT1 in response to oxidative stress. Acts as an inhibitor of type I interferon production during virus-induced apoptosis by mediating cleavage of antiviral proteins CGAS, IRF3 and MAVS, thereby preventing cytokine overproduction. Also involved in pyroptosis by mediating cleavage and activation of gasdermin-E (GSDME). Cleaves XRCC4 and phospholipid scramblase proteins XKR4, XKR8 and XKR9, leading to promote phosphatidylserine exposure on apoptotic cell surface. Cleaves BIRC6 following inhibition of BIRC6-caspase binding by DIABLO/SMAC. This chain is Caspase-3 (CASP3), found in Saimiri boliviensis boliviensis (Bolivian squirrel monkey).